Reading from the N-terminus, the 1053-residue chain is Sal-like protein 4 (1053 aa).

Residues 1–62 form a disordered region; sequence MSRRKQAKPQ…DEVASEDEAT (62 aa). The span at 20-46 shows a compositional bias: low complexity; it reads EQQPQQQTPEFADAAPAAPAAGELGAP. Residue serine 57 is modified to Phosphoserine. Residues 72 to 94 form a C2H2-type 1; atypical zinc finger; sequence HVCEKCCAEFFSISEFLEHKKNC. A disordered region spans residues 116 to 149; it reads SGAVLSHQPTSPGSKDCHRENGGSSEDMKEKPDA. A compositionally biased stretch (basic and acidic residues) spans 130–149; that stretch reads KDCHRENGGSSEDMKEKPDA. Lysine 156 is covalently cross-linked (Glycyl lysine isopeptide (Lys-Gly) (interchain with G-Cter in SUMO1); alternate). Residue lysine 156 forms a Glycyl lysine isopeptide (Lys-Gly) (interchain with G-Cter in SUMO2); alternate linkage. Glycyl lysine isopeptide (Lys-Gly) (interchain with G-Cter in SUMO2) cross-links involve residues lysine 175, lysine 190, and lysine 290. Serine 307 bears the Phosphoserine mark. A Glycyl lysine isopeptide (Lys-Gly) (interchain with G-Cter in SUMO1); alternate cross-link involves residue lysine 316. A Glycyl lysine isopeptide (Lys-Gly) (interchain with G-Cter in SUMO2); alternate cross-link involves residue lysine 316. Residue lysine 372 forms a Glycyl lysine isopeptide (Lys-Gly) (interchain with G-Cter in SUMO2) linkage. Residue lysine 374 forms a Glycyl lysine isopeptide (Lys-Gly) (interchain with G-Cter in SUMO1); alternate linkage. Lysine 374 participates in a covalent cross-link: Glycyl lysine isopeptide (Lys-Gly) (interchain with G-Cter in SUMO2); alternate. 2 C2H2-type zinc fingers span residues 382–404 and 410–432; these read HKCKYCSKVFGTDSSLQIHLRSH and FVCSVCGHRFTTKGNLKVHFHRH. A Glycyl lysine isopeptide (Lys-Gly) (interchain with G-Cter in SUMO2) cross-link involves residue lysine 436. Over residues 483-496 the composition is skewed to polar residues; the sequence is VGLPQNLSSGTNPK. Residues 483–546 are disordered; that stretch reads VGLPQNLSSG…QGSGTPEPGS (64 aa). At threonine 541 the chain carries Phosphothreonine. Lysine 550 is covalently cross-linked (Glycyl lysine isopeptide (Lys-Gly) (interchain with G-Cter in SUMO2)). 2 consecutive C2H2-type zinc fingers follow at residues 566–588 and 594–616; these read NECLICHRVLSCQSSLKMHYRTH and FQCKICGRAFSTKGNLKTHLGVH. Glycyl lysine isopeptide (Lys-Gly) (interchain with G-Cter in SUMO2) cross-links involve residues lysine 597 and lysine 623. The C2H2-type 6 zinc-finger motif lies at 626 to 648; it reads HSCPICQKKFTNAVMLQQHIRMH. 3 disordered regions span residues 694 to 714, 736 to 776, and 788 to 828; these read EEVSSQEAPSSSSKVPTPLPS, VGPA…QSRS, and LSPA…LPST. The span at 698 to 708 shows a compositional bias: low complexity; the sequence is SQEAPSSSSKV. Composition is skewed to polar residues over residues 743-776 and 788-797; these read LQRQGSRENGSVESDGLTNDSSSLMGDQEYQSRS and LSPANSQAES. Phosphoserine occurs at positions 776 and 789. Positions 810–821 are enriched in basic and acidic residues; it reads ESSENSRTEMEG. A Glycyl lysine isopeptide (Lys-Gly) (interchain with G-Cter in SUMO1); alternate cross-link involves residue lysine 838. Lysine 838 participates in a covalent cross-link: Glycyl lysine isopeptide (Lys-Gly) (interchain with G-Cter in SUMO2); alternate. Serine 852 carries the phosphoserine modification. The segment at 870-892 adopts a C2H2-type 7 zinc-finger fold; that stretch reads HGCTRCGKNFSSASALQIHERTH. Residue lysine 896 forms a Glycyl lysine isopeptide (Lys-Gly) (interchain with G-Cter in SUMO2) linkage. The segment at 898–920 adopts a C2H2-type 8 zinc-finger fold; that stretch reads FVCNICGRAFTTKGNLKVHYMTH. Residues lysine 932 and lysine 947 each participate in a glycyl lysine isopeptide (Lys-Gly) (interchain with G-Cter in SUMO2) cross-link. Positions 1018-1039 are disordered; it reads GSQSGISADVEKPSATDGVPKH. Serine 1019 carries the phosphoserine modification.

It belongs to the sal C2H2-type zinc-finger protein family. Interacts with POU5F1/OCT4. Interacts with NANOG. Interacts with BEND3. Interacts with NSD2 (via PHD-type zinc fingers 1, 2 and 3). Interacts with NRBP1. Isoform SALL4B exists primarily as a ubiquitinated form. Post-translationally, sumoylation with both SUMO1 and SUMO2 regulates the stability, subcellular localization, transcriptional activity, and may reduce interaction with POU5F1/OCT4. As to expression, expressed in testis. Constitutively expressed in acute myeloid leukemia (AML).

Its subcellular location is the cytoplasm. It localises to the nucleus. Transcription factor with a key role in the maintenance and self-renewal of embryonic and hematopoietic stem cells. This chain is Sal-like protein 4 (SALL4), found in Homo sapiens (Human).